We begin with the raw amino-acid sequence, 143 residues long: Nucleoside diphosphate kinase (143 aa).

Positions 11, 59, 87, 93, 104, and 114 each coordinate ATP. His117 (pros-phosphohistidine intermediate) is an active-site residue.

The protein belongs to the NDK family. In terms of assembly, homotetramer. Requires Mg(2+) as cofactor.

It is found in the cytoplasm. The enzyme catalyses a 2'-deoxyribonucleoside 5'-diphosphate + ATP = a 2'-deoxyribonucleoside 5'-triphosphate + ADP. It carries out the reaction a ribonucleoside 5'-diphosphate + ATP = a ribonucleoside 5'-triphosphate + ADP. In terms of biological role, major role in the synthesis of nucleoside triphosphates other than ATP. The ATP gamma phosphate is transferred to the NDP beta phosphate via a ping-pong mechanism, using a phosphorylated active-site intermediate. The polypeptide is Nucleoside diphosphate kinase (Sodalis glossinidius (strain morsitans)).